We begin with the raw amino-acid sequence, 316 residues long: Pantothenate kinase (316 aa).

95–102 (GSVAVGKS) is an ATP binding site.

It belongs to the prokaryotic pantothenate kinase family.

It localises to the cytoplasm. The enzyme catalyses (R)-pantothenate + ATP = (R)-4'-phosphopantothenate + ADP + H(+). It participates in cofactor biosynthesis; coenzyme A biosynthesis; CoA from (R)-pantothenate: step 1/5. In Shewanella piezotolerans (strain WP3 / JCM 13877), this protein is Pantothenate kinase.